The sequence spans 230 residues: 7-cyano-7-deazaguanine synthase (230 aa).

10–20 (LSGGLDSATTA) is an ATP binding site. Residues Cys191, Cys199, Cys202, and Cys205 each contribute to the Zn(2+) site.

It belongs to the QueC family. Zn(2+) is required as a cofactor.

It catalyses the reaction 7-carboxy-7-deazaguanine + NH4(+) + ATP = 7-cyano-7-deazaguanine + ADP + phosphate + H2O + H(+). The protein operates within purine metabolism; 7-cyano-7-deazaguanine biosynthesis. In terms of biological role, catalyzes the ATP-dependent conversion of 7-carboxy-7-deazaguanine (CDG) to 7-cyano-7-deazaguanine (preQ(0)). The chain is 7-cyano-7-deazaguanine synthase from Gloeothece citriformis (strain PCC 7424) (Cyanothece sp. (strain PCC 7424)).